We begin with the raw amino-acid sequence, 149 residues long: FAD synthase (149 aa).

ATP-binding positions include 9–10, 14–17, Asp-93, and Tyr-120; these read VF and HPGH.

Belongs to the archaeal FAD synthase family. Homodimer. A divalent metal cation is required as a cofactor.

It catalyses the reaction FMN + ATP + H(+) = FAD + diphosphate. It participates in cofactor biosynthesis; FAD biosynthesis; FAD from FMN: step 1/1. In terms of biological role, catalyzes the transfer of the AMP portion of ATP to flavin mononucleotide (FMN) to produce flavin adenine dinucleotide (FAD) coenzyme. The protein is FAD synthase of Aciduliprofundum boonei (strain DSM 19572 / T469).